The primary structure comprises 229 residues: Large ribosomal subunit protein uL1 (229 aa).

The protein belongs to the universal ribosomal protein uL1 family. As to quaternary structure, part of the 50S ribosomal subunit.

Its function is as follows. Binds directly to 23S rRNA. The L1 stalk is quite mobile in the ribosome, and is involved in E site tRNA release. Functionally, protein L1 is also a translational repressor protein, it controls the translation of the L11 operon by binding to its mRNA. This chain is Large ribosomal subunit protein uL1, found in Flavobacterium psychrophilum (strain ATCC 49511 / DSM 21280 / CIP 103535 / JIP02/86).